Here is a 686-residue protein sequence, read N- to C-terminus: MSNQHRQILVTCALPYANGPIHLGHMLEHIQADIWVRFQRMRGNEIHFVCADDAHGTPIMLKADQMGITPEQLIADVKEKHYADFCGFNISFDNYHSTHSEENRELSELIYSRLKENGFIKSRTISQLFDPEKSMFLPDRFVKGTCPKCKAEDQYGDNCEVCSATYSPTELINPRSAVSGATPVIKESEHFFFDLPSFESMLKEWNRSGALQSEVANKMQEWFDAGLQQWDISRDAPYFGFKIPGTENKYFYVWLDAPIGYMASFKNLCKRENLDFDRFWNKDSNTELYHFIGKDIMYFHSLFWPAMLDGANYRKPTNIFVHGYVTVNGEKMSKSRGTFIQAATYLKHLDPECLRYYYAAKLSNRIDDLDLNLDDFVQRVNTDLVNKLVNLASRNAGFIQKRFDGKLADKLEDESLFAEFIAQSEQIAAYYENREFGKAIREIMALTDKANKYVDDKAPWVIAKEEGREAELQAVCSMGIQLFRVLMGYLKPVLPKLAERSEAFLQAELTWDNLAQPLLNHGIAPFKALFSRLDVKQIDAMIEASKAENAAVNATVKKEEKNSKKSTALLTDFEPIEPEISIDDFAKIDLRVAKVIKCEEVPESKKLLKFQLDLGFEQRQVLSGIKGAYNNPEELEGRFVIVVANLAPRKMKFGVSEGMILSAGTGGEDLYLLDVDAGVKAGSRVM.

Residues 15 to 25 (PYANGPIHLGH) carry the 'HIGH' region motif. Zn(2+) contacts are provided by cysteine 146, cysteine 149, cysteine 159, and cysteine 162. A 'KMSKS' region motif is present at residues 331–335 (KMSKS). Lysine 334 is a binding site for ATP. The tRNA-binding domain occupies 584 to 686 (DFAKIDLRVA…AGVKAGSRVM (103 aa)).

It belongs to the class-I aminoacyl-tRNA synthetase family. MetG type 1 subfamily. Homodimer. The cofactor is Zn(2+).

It is found in the cytoplasm. The enzyme catalyses tRNA(Met) + L-methionine + ATP = L-methionyl-tRNA(Met) + AMP + diphosphate. Is required not only for elongation of protein synthesis but also for the initiation of all mRNA translation through initiator tRNA(fMet) aminoacylation. This Mannheimia succiniciproducens (strain KCTC 0769BP / MBEL55E) protein is Methionine--tRNA ligase.